Reading from the N-terminus, the 183-residue chain is MKGGKRAQQPAKQNAHRLNGEIIGVKEVRLTGLDGESVGVVSLNEALDVALTAGVDLVEISPNAEPPVCRVMDYGKFLFEKAKAAKEQKKKQKQVQTKEIKFRPGTDIGDYQVKLRNLTGFLEEGNKVKVTIRFRGREMAHQNIGVDVLNRLKADTEEFAVVESFPTRIEGRQMIMVLAPKKK.

The protein belongs to the IF-3 family. Monomer.

It is found in the cytoplasm. IF-3 binds to the 30S ribosomal subunit and shifts the equilibrium between 70S ribosomes and their 50S and 30S subunits in favor of the free subunits, thus enhancing the availability of 30S subunits on which protein synthesis initiation begins. This Aliivibrio salmonicida (strain LFI1238) (Vibrio salmonicida (strain LFI1238)) protein is Translation initiation factor IF-3.